The sequence spans 511 residues: 2,3-bisphosphoglycerate-independent phosphoglycerate mutase (511 aa).

The Mn(2+) site is built by Asp14 and Ser64. Ser64 (phosphoserine intermediate) is an active-site residue. Substrate contacts are provided by residues His125, 155-156 (RD), Arg187, Arg193, 259-262 (RADR), and Lys333. Mn(2+) is bound by residues Asp400, His404, Asp441, His442, and His460.

Belongs to the BPG-independent phosphoglycerate mutase family. Monomer. It depends on Mn(2+) as a cofactor.

It carries out the reaction (2R)-2-phosphoglycerate = (2R)-3-phosphoglycerate. Its pathway is carbohydrate degradation; glycolysis; pyruvate from D-glyceraldehyde 3-phosphate: step 3/5. In terms of biological role, catalyzes the interconversion of 2-phosphoglycerate and 3-phosphoglycerate. The polypeptide is 2,3-bisphosphoglycerate-independent phosphoglycerate mutase (Pseudoalteromonas atlantica (strain T6c / ATCC BAA-1087)).